The chain runs to 500 residues: Lysine--tRNA ligase (500 aa).

Mg(2+) is bound by residues E409 and E416.

Belongs to the class-II aminoacyl-tRNA synthetase family. As to quaternary structure, homodimer. The cofactor is Mg(2+).

It is found in the cytoplasm. The enzyme catalyses tRNA(Lys) + L-lysine + ATP = L-lysyl-tRNA(Lys) + AMP + diphosphate. The chain is Lysine--tRNA ligase from Lysinibacillus sphaericus (strain C3-41).